Consider the following 226-residue polypeptide: UPF0758 protein SUB0843 (226 aa).

An MPN domain is found at 103–225 (QILSSYQVAK…YYSFREKSDI (123 aa)). 3 residues coordinate Zn(2+): His174, His176, and Asp187. Positions 174–187 (HNHPSGLTNPSEND) match the JAMM motif motif.

Belongs to the UPF0758 family.

This chain is UPF0758 protein SUB0843, found in Streptococcus uberis (strain ATCC BAA-854 / 0140J).